A 217-amino-acid chain; its full sequence is ATP phosphoribosyltransferase (217 aa).

The protein belongs to the ATP phosphoribosyltransferase family. Short subfamily. In terms of assembly, heteromultimer composed of HisG and HisZ subunits.

The protein resides in the cytoplasm. It carries out the reaction 1-(5-phospho-beta-D-ribosyl)-ATP + diphosphate = 5-phospho-alpha-D-ribose 1-diphosphate + ATP. Its pathway is amino-acid biosynthesis; L-histidine biosynthesis; L-histidine from 5-phospho-alpha-D-ribose 1-diphosphate: step 1/9. Functionally, catalyzes the condensation of ATP and 5-phosphoribose 1-diphosphate to form N'-(5'-phosphoribosyl)-ATP (PR-ATP). Has a crucial role in the pathway because the rate of histidine biosynthesis seems to be controlled primarily by regulation of HisG enzymatic activity. The chain is ATP phosphoribosyltransferase from Polaromonas naphthalenivorans (strain CJ2).